Here is a 298-residue protein sequence, read N- to C-terminus: 4-hydroxy-tetrahydrodipicolinate synthase (298 aa).

Thr-51 provides a ligand contact to pyruvate. Residue Tyr-139 is the Proton donor/acceptor of the active site. Lys-167 acts as the Schiff-base intermediate with substrate in catalysis. Ile-209 is a binding site for pyruvate.

Belongs to the DapA family. As to quaternary structure, homotetramer; dimer of dimers.

Its subcellular location is the cytoplasm. The catalysed reaction is L-aspartate 4-semialdehyde + pyruvate = (2S,4S)-4-hydroxy-2,3,4,5-tetrahydrodipicolinate + H2O + H(+). Its pathway is amino-acid biosynthesis; L-lysine biosynthesis via DAP pathway; (S)-tetrahydrodipicolinate from L-aspartate: step 3/4. Its function is as follows. Catalyzes the condensation of (S)-aspartate-beta-semialdehyde [(S)-ASA] and pyruvate to 4-hydroxy-tetrahydrodipicolinate (HTPA). In Histophilus somni (strain 129Pt) (Haemophilus somnus), this protein is 4-hydroxy-tetrahydrodipicolinate synthase.